A 664-amino-acid polypeptide reads, in one-letter code: MGKTPGKWIKTLLLGKKSPKSNSDNRSQKLKSAKKEELVESVTEDLSNLTVDPPVVSSQPVPASTAQNVVSPINGDESKDNLESRNDLGEVELEQAAIKVQATFRAHQARRAFRTLKGIIRLQAVIRGHLVRRQAIATYSCIWGIVKFQALVRGQKARSSDIAIQFQKKHMEASDSEVLQSSTCSWMDNPTKFVFVDKLLASSPTALPLKIQYGPEEPNSAKVWLERWTQLQVWSSGSRVPRIEIPKSQSKKRNYQAVVEAEKKRPKRSIKKPSGTTSGTGPSRFTAERNKPKRNVRKASTLSKDPLRNESDKANHNSRKSRSGSKEGSPLEIKDEKPSPSLKRSSLSNGSKKATLRSAEKKKKDIPDSSVQIQPEGKVSENVLEGGDNIEFAEKEKDTTDSVQIESEGKVSGNVLEGGEGENIVFTEKEKDTADPVQIEPERKVLEEGDNIESSGKEKDTGDSVQIESEGKVLEGGDNIEFGEKEKDKADAVPIEFDIVKDEKSPVLDRTEEDELKTAETSDKAEALKCADVKVSSENGNVGSDNTKQSEKRALLPANIDKQDDGLTLSGRKIPSYMAPTASAKARVKGEASPRFAQAKTEINGALRRHSLPSPANGKLSTTTMSPRAQKLLLASAKGSMNGDKSFTSSKDITHKSTRTDWKR.

The interval 1 to 85 (MGKTPGKWIK…DESKDNLESR (85 aa)) is disordered. Over residues 51 to 64 (VDPPVVSSQPVPAS) the composition is skewed to low complexity. Residues 76–85 (DESKDNLESR) are compositionally biased toward basic and acidic residues. 3 IQ domains span residues 93 to 121 (LEQA…GIIR), 122 to 140 (LQAV…ATYS), and 144 to 170 (GIVK…QKKH). The tract at residues 106–116 (AHQARRAFRTL) is calmodulin-binding. Disordered regions lie at residues 244–488 (EIPK…KEKD), 502–573 (DEKS…SGRK), and 637–664 (AKGS…DWKR). The Nuclear localization signal 1 motif lies at 251-258 (KKRNYQAV). Residues 305-315 (DPLRNESDKAN) show a composition bias toward basic and acidic residues. The segment covering 339–353 (SPSLKRSSLSNGSKK) has biased composition (low complexity). The Nuclear localization signal 2 signature appears at 351 to 358 (SKKATLRS). Basic and acidic residues-rich tracts occupy residues 358–367 (SAEKKKKDIP), 427–447 (TEKE…KVLE), and 502–532 (DEKS…KCAD). The span at 536–547 (SSENGNVGSDNT) shows a compositional bias: polar residues. Residues 652–664 (DITHKSTRTDWKR) are compositionally biased toward basic and acidic residues.

The protein belongs to the IQD family. Binds to multiple calmodulin (CaM) in the presence of Ca(2+) and CaM-like proteins.

It localises to the nucleus. Its subcellular location is the cytoplasm. The protein localises to the cytoskeleton. Its function is as follows. May be involved in cooperative interactions with calmodulins or calmodulin-like proteins. Recruits calmodulin proteins to microtubules, thus being a potential scaffold in cellular signaling and trafficking. May associate with nucleic acids and regulate gene expression at the transcriptional or post-transcriptional level. This Arabidopsis thaliana (Mouse-ear cress) protein is Protein IQ-DOMAIN 28.